The following is a 1140-amino-acid chain: Envelopment polyprotein (1140 aa).

A signal peptide spans 1 to 17; it reads MVGWVCIFLVVLTTATA. The Lumenal segment spans residues 18–480; the sequence is GLTRNLYELK…AHSLAVELCV (463 aa). 6 disulfides stabilise this stretch: Cys30/Cys155, Cys64/Cys161, Cys113/Cys132, Cys137/Cys142, Cys179/Cys189, and Cys214/Cys251. A glycan (N-linked (GlcNAc...) asparagine; by host) is linked at Asn138. Residue Asn351 is glycosylated (N-linked (GlcNAc...) asparagine; by host). Cystine bridges form between Cys380-Cys439, Cys384-Cys393, Cys409-Cys428, and Cys456-Cys479. The N-linked (GlcNAc...) asparagine; by host glycan is linked to Asn403. The chain crosses the membrane as a helical span at residues 490–510; it reads ALLITFCFGWLLIPAVTLIIL. Residues 511 to 631 lie on the Cytoplasmic side of the membrane; the sequence is KILRLLTFSC…LGVFRYKSRC (121 aa). Residues 520 to 537 are binding to the ribonucleoprotein; it reads CSHYSTESKFKVILERVK. 2 CCHC-type zinc fingers span residues 549–569 and 574–595; these read CDIC…KKSC and CPYC…FAIC. 3 binding to the ribonucleoprotein regions span residues 592-609, 596-607, and 615-629; these read FAIC…KKSL, KLTNRFQENLKK, and RKGC…RYKS. The region spanning 615–638 is the ITAM domain; sequence RKGCYRTLGVFRYKSRCYVGLVWG. A phosphotyrosine mark is found at Tyr619 and Tyr632. A YxxL motif is present at residues 619–622; that stretch reads YRTL. Residues 632-652 form a helical membrane-spanning segment; that stretch reads YVGLVWGILLTTELIIWAASA. Residues 653–1108 lie on the Lumenal side of the membrane; that stretch reads DTPLMESGWS…EWLLGILNGN (456 aa). Intrachain disulfides connect Cys739–Cys774, Cys743–Cys781, Cys755–Cys888, Cys769–Cys899, Cys784–Cys907, Cys810–Cys819, Cys827–Cys836, and Cys867–Cys871. The fusion loop stretch occupies residues 761–781; it reads YQYETSWGCNPPDCPGVGTGC. Asn931 is a glycosylation site (N-linked (GlcNAc...) asparagine; by host). Intrachain disulfides connect Cys973–Cys1003, Cys996–Cys1048, Cys1013–Cys1018, Cys1049–Cys1054, and Cys1088–Cys1092. A helical transmembrane segment spans residues 1109–1129; sequence WVVVAVLIVILILSILLFSFF. A binding to the ribonucleoprotein region spans residues 1125–1140; it reads LFSFFCPVRSRKNKAN. Topologically, residues 1130–1140 are cytoplasmic; the sequence is CPVRSRKNKAN.

It belongs to the hantavirus envelope glycoprotein family. As to quaternary structure, homodimer. Homotetramer; forms heterotetrameric Gn-Gc spikes in the pre-fusion conformation. Interacts (via C-terminus) with the nucleoprotein. Interacts with host TUFM; this interaction contributes to the virus-induced degradation of mitochondria by autophagy, which leads to degradation of host MAVS and inhibition of type I interferon (IFN) responses. Interacts with host MAP1LC3B; this interaction contributes to the virus-induced degradation of mitochondria by autophagy, which leads to degradation of host MAVS and inhibition of type I interferon (IFN) responses. Homodimer. Homotetramer; forms heterotetrameric Gn-Gc spikes in the pre-fusion conformation. Homotrimer; forms homotrimer in the post-fusion conformation at acidic pH. Interacts (via C-terminus) with the nucleoprotein. Post-translationally, envelope polyprotein precursor is quickly cleaved in vivo just after synthesis, presumably by host signal peptidase.

It is found in the virion membrane. The protein resides in the host cell surface. The protein localises to the host Golgi apparatus membrane. It localises to the host endoplasmic reticulum membrane. Its subcellular location is the host mitochondrion. Forms homotetramers with glycoprotein C at the surface of the virion. Attaches the virion to host cell receptors including integrin ITGAV/ITGB3. This attachment induces virion internalization predominantly through clathrin-dependent endocytosis. Mediates the assembly and budding of infectious virus particles through its interaction with the nucleocapsid protein and the viral genome. May dysregulate normal immune and endothelial cell responses through an ITAM motif. Translocates to mitochondria, binds to host TUFM and recruits MAP1LC3B. These interactions induce mitochondrial autophagy and therefore destruction of host MAVS leading to inhibition of type I interferon (IFN) responses. Concomitant breakdown of glycoprotein N is apparently prevented by the nucleoprotein that may inhibit Gn-stimulated autophagosome-lysosome fusion. Interacts with the viral genomic RNA. In terms of biological role, forms homotetramers with glycoprotein N at the surface of the virion. Attaches the virion to host cell receptors including integrin ITGAV/ITGB3. This attachment induces virion internalization predominantly through clathrin-dependent endocytosis. Class II fusion protein that promotes fusion of viral membrane with host endosomal membrane after endocytosis of the virion. The chain is Envelopment polyprotein (GP) from Sin Nombre orthohantavirus (SNV).